The following is a 104-amino-acid chain: Late embryogenis abundant protein 41 (104 aa).

The N-terminal 31 residues, 1–31, are a transit peptide targeting the mitochondrion; the sequence is MAARSLSGAVKSLCSAASGSLSCSIVLRRSY.

Belongs to the LEA type 3 family.

Its subcellular location is the mitochondrion. In Arabidopsis thaliana (Mouse-ear cress), this protein is Late embryogenis abundant protein 41.